The following is a 909-amino-acid chain: Nitrate reductase [NADH] (909 aa).

Residue C187 participates in Mo-molybdopterin binding. Residues 535–610 (SKMYSMSEVK…LEDFRIGELI (76 aa)) enclose the Cytochrome b5 heme-binding domain. 2 residues coordinate heme: H570 and H593. Residues 652–764 (REKIPCKLVD…KGPLGHIEYQ (113 aa)) enclose the FAD-binding FR-type domain. FAD contacts are provided by residues 704–707 (RAYT), 721–725 (VVKIY), F726, F733, 738–740 (QMS), and T791.

Belongs to the nitrate reductase family. Homodimer. FAD is required as a cofactor. The cofactor is heme. It depends on Mo-molybdopterin as a cofactor.

The catalysed reaction is nitrite + NAD(+) + H2O = nitrate + NADH + H(+). Its activity is regulated as follows. Regulated by the nitrogen source and controlled by the circadian rhythm. Its function is as follows. Nitrate reductase is a key enzyme involved in the first step of nitrate assimilation in plants, fungi and bacteria. This chain is Nitrate reductase [NADH] (NIA), found in Petunia hybrida (Petunia).